The primary structure comprises 241 residues: Probable transcriptional regulatory protein str0195 (241 aa).

It belongs to the TACO1 family. YeeN subfamily.

It is found in the cytoplasm. This chain is Probable transcriptional regulatory protein str0195, found in Streptococcus thermophilus (strain CNRZ 1066).